Reading from the N-terminus, the 944-residue chain is 2-oxoglutarate dehydrogenase E1 component (944 aa).

The segment at 915–944 is disordered; the sequence is RRRSSPAEGDPTVHKKEQERIVSDSLTRKN. Basic and acidic residues predominate over residues 925-936; it reads PTVHKKEQERIV.

It belongs to the alpha-ketoglutarate dehydrogenase family. In terms of assembly, homodimer. Part of the 2-oxoglutarate dehydrogenase (OGDH) complex composed of E1 (2-oxoglutarate dehydrogenase), E2 (dihydrolipoamide succinyltransferase) and E3 (dihydrolipoamide dehydrogenase); the complex contains multiple copies of the three enzymatic components (E1, E2 and E3). Thiamine diphosphate serves as cofactor.

It catalyses the reaction N(6)-[(R)-lipoyl]-L-lysyl-[protein] + 2-oxoglutarate + H(+) = N(6)-[(R)-S(8)-succinyldihydrolipoyl]-L-lysyl-[protein] + CO2. Its function is as follows. E1 component of the 2-oxoglutarate dehydrogenase (OGDH) complex which catalyzes the decarboxylation of 2-oxoglutarate, the first step in the conversion of 2-oxoglutarate to succinyl-CoA and CO(2). In Bacillus velezensis (strain DSM 23117 / BGSC 10A6 / LMG 26770 / FZB42) (Bacillus amyloliquefaciens subsp. plantarum), this protein is 2-oxoglutarate dehydrogenase E1 component.